Here is a 158-residue protein sequence, read N- to C-terminus: Small ribosomal subunit protein uS15 (158 aa).

Basic residues predominate over residues 1-18; it reads MARMHARKRGKSGSKRPP. Positions 1-21 are disordered; sequence MARMHARKRGKSGSKRPPRTA.

Belongs to the universal ribosomal protein uS15 family. Part of the 30S ribosomal subunit.

The protein is Small ribosomal subunit protein uS15 of Pyrococcus horikoshii (strain ATCC 700860 / DSM 12428 / JCM 9974 / NBRC 100139 / OT-3).